The chain runs to 462 residues: Mitochondrial-processing peptidase subunit beta (462 aa).

The transit peptide at 1-20 (MFSRTASKFRNTRRLLSTIS) directs the protein to the mitochondrion. H70 contributes to the Zn(2+) binding site. Residue E73 is the Proton acceptor of the active site. Zn(2+) is bound by residues H74 and E150. Position 243 is a phosphoserine (S243).

It belongs to the peptidase M16 family. As to quaternary structure, heterodimer of MAS2 (alpha) and MAS1 (beta) subunits, forming the mitochondrial processing protease (MPP) in which MAS2 is involved in substrate recognition and binding and MAS1 is the catalytic subunit. The cofactor is Zn(2+).

It localises to the mitochondrion matrix. It catalyses the reaction Release of N-terminal transit peptides from precursor proteins imported into the mitochondrion, typically with Arg in position P2.. Its activity is regulated as follows. Binding to MAS2 is required for catalytic activity. Inhibited by high levels (&gt; 1uM) of zinc. Inhibited by metal chelators ethylenediaminetetraacetic acid (EDTA) and O-phenanthroline. Its function is as follows. Catalytic subunit of the essential mitochondrial processing protease (MPP), which cleaves the mitochondrial sequence off newly imported precursors proteins. Preferentially, cleaves after an arginine at position P2. This chain is Mitochondrial-processing peptidase subunit beta, found in Saccharomyces cerevisiae (strain ATCC 204508 / S288c) (Baker's yeast).